The chain runs to 218 residues: Phosphatidylserine decarboxylase proenzyme (218 aa).

Serine 187 serves as the catalytic Schiff-base intermediate with substrate; via pyruvic acid. Residue serine 187 is modified to Pyruvic acid (Ser); by autocatalysis.

It belongs to the phosphatidylserine decarboxylase family. PSD-A subfamily. As to quaternary structure, heterodimer of a large membrane-associated beta subunit and a small pyruvoyl-containing alpha subunit. Pyruvate serves as cofactor. Is synthesized initially as an inactive proenzyme. Formation of the active enzyme involves a self-maturation process in which the active site pyruvoyl group is generated from an internal serine residue via an autocatalytic post-translational modification. Two non-identical subunits are generated from the proenzyme in this reaction, and the pyruvate is formed at the N-terminus of the alpha chain, which is derived from the carboxyl end of the proenzyme. The post-translation cleavage follows an unusual pathway, termed non-hydrolytic serinolysis, in which the side chain hydroxyl group of the serine supplies its oxygen atom to form the C-terminus of the beta chain, while the remainder of the serine residue undergoes an oxidative deamination to produce ammonia and the pyruvoyl prosthetic group on the alpha chain.

It localises to the cell membrane. It catalyses the reaction a 1,2-diacyl-sn-glycero-3-phospho-L-serine + H(+) = a 1,2-diacyl-sn-glycero-3-phosphoethanolamine + CO2. The protein operates within phospholipid metabolism; phosphatidylethanolamine biosynthesis; phosphatidylethanolamine from CDP-diacylglycerol: step 2/2. Its function is as follows. Catalyzes the formation of phosphatidylethanolamine (PtdEtn) from phosphatidylserine (PtdSer). The protein is Phosphatidylserine decarboxylase proenzyme of Geobacter metallireducens (strain ATCC 53774 / DSM 7210 / GS-15).